Consider the following 188-residue polypeptide: 2-amino-4-hydroxy-6-hydroxymethyldihydropteridine pyrophosphokinase (188 aa).

The protein belongs to the HPPK family.

It catalyses the reaction 6-hydroxymethyl-7,8-dihydropterin + ATP = (7,8-dihydropterin-6-yl)methyl diphosphate + AMP + H(+). The protein operates within cofactor biosynthesis; tetrahydrofolate biosynthesis; 2-amino-4-hydroxy-6-hydroxymethyl-7,8-dihydropteridine diphosphate from 7,8-dihydroneopterin triphosphate: step 4/4. In terms of biological role, catalyzes the transfer of pyrophosphate from adenosine triphosphate (ATP) to 6-hydroxymethyl-7,8-dihydropterin, an enzymatic step in folate biosynthesis pathway. The polypeptide is 2-amino-4-hydroxy-6-hydroxymethyldihydropteridine pyrophosphokinase (folK) (Mycobacterium tuberculosis (strain ATCC 25618 / H37Rv)).